We begin with the raw amino-acid sequence, 256 residues long: Acetyl-coenzyme A carboxylase carboxyl transferase subunit alpha (256 aa).

A CoA carboxyltransferase C-terminal domain is found at 1-236; it reads MTDVARILKE…RSHLIDEITQ (236 aa).

The protein belongs to the AccA family. In terms of assembly, acetyl-CoA carboxylase is a heterohexamer composed of biotin carboxyl carrier protein (AccB), biotin carboxylase (AccC) and two subunits each of ACCase subunit alpha (AccA) and ACCase subunit beta (AccD).

The protein localises to the cytoplasm. The catalysed reaction is N(6)-carboxybiotinyl-L-lysyl-[protein] + acetyl-CoA = N(6)-biotinyl-L-lysyl-[protein] + malonyl-CoA. The protein operates within lipid metabolism; malonyl-CoA biosynthesis; malonyl-CoA from acetyl-CoA: step 1/1. Functionally, component of the acetyl coenzyme A carboxylase (ACC) complex. First, biotin carboxylase catalyzes the carboxylation of biotin on its carrier protein (BCCP) and then the CO(2) group is transferred by the carboxyltransferase to acetyl-CoA to form malonyl-CoA. This chain is Acetyl-coenzyme A carboxylase carboxyl transferase subunit alpha, found in Streptococcus equi subsp. zooepidemicus (strain MGCS10565).